A 307-amino-acid chain; its full sequence is Ribosomal RNA small subunit methyltransferase H (307 aa).

Residues 32 to 34 (GGH), Asp-52, Phe-78, Asp-99, and Gln-106 each bind S-adenosyl-L-methionine.

This sequence belongs to the methyltransferase superfamily. RsmH family.

The protein resides in the cytoplasm. It catalyses the reaction cytidine(1402) in 16S rRNA + S-adenosyl-L-methionine = N(4)-methylcytidine(1402) in 16S rRNA + S-adenosyl-L-homocysteine + H(+). Its function is as follows. Specifically methylates the N4 position of cytidine in position 1402 (C1402) of 16S rRNA. This chain is Ribosomal RNA small subunit methyltransferase H, found in Acinetobacter baumannii (strain AB0057).